Here is a 394-residue protein sequence, read N- to C-terminus: MDEPSTDKILIGAQIITTVITLFTGVFEFIIAAKSKMKRMKSEQMFSVNQDGLIHIIKSLLPGRNIIFISNAPTSTTDPSFNSQTMKNFLKVIFRLLPFFIGAVFIHLNIIPFHHLIIFTENGKWYFDSIQEELIPIVKERLKQIMSSQPDVIFACGAVVRDIFYMYLEEGSIEMFEINGNLKVDINKFKKIYTTVSDKNISPQSNEILDLFEFDTTKSSYEDVIEEYSKFENDSLGSFENPDYSGFHLLSKRKWNNKEALIVGIGKSNNKTTVQIKGDLLDKGYFRTELAIDTYFDRNKVLINKMVKNFKSTQEIIKPSPVISGNWSLDEQKALMVEVSTLGNKSEINWFFISKQLFLKGISRNARECQRKHESIQYVGLSGNPKGKFKRTFD.

Transmembrane regions (helical) follow at residues Ile-11–Ile-31 and Phe-99–Phe-119. The 53-residue stretch at Gly-325–Gln-377 folds into the Myb-like domain.

The protein resides in the membrane. The protein is Myb-like protein R (mybR) of Dictyostelium discoideum (Social amoeba).